A 248-amino-acid chain; its full sequence is Aquaporin TIP2-3 (248 aa).

The next 2 helical transmembrane spans lie at 20–40 and 54–74; these read AYVA…GSAI and AGLV…VSMA. The NPA 1 signature appears at 83 to 85; it reads NPA. 3 consecutive transmembrane segments (helical) span residues 97–119, 141–161, and 168–188; these read TILT…CFLL, GVVM…ATAA, and LGTI…LAAG. Positions 196-198 match the NPA 2 motif; sequence NPA. A helical transmembrane segment spans residues 217-237; that stretch reads WVGPLVGGGLAGLVYGDVFIA.

It belongs to the MIP/aquaporin (TC 1.A.8) family. TIP (TC 1.A.8.10) subfamily. As to expression, specifically expressed in roots.

It localises to the cell membrane. Water channel required to facilitate the transport of water across cell membrane. In Zea mays (Maize), this protein is Aquaporin TIP2-3 (TIP2-3).